Consider the following 110-residue polypeptide: SOSS complex subunit C (110 aa).

The protein belongs to the SOSS-C family. In terms of assembly, belongs to the multiprotein complex Integrator. Component of the SOSS complex, composed of soss-b (soss-b1/nabp2 or soss-b2/nabp1), soss-a/ints3 and soss-c/inip.

The protein resides in the nucleus. Component of the SOSS complex, a multiprotein complex that functions downstream of the MRN complex to promote DNA repair and G2/M checkpoint. The SOSS complex associates with single-stranded DNA at DNA lesions and influences diverse endpoints in the cellular DNA damage response including cell-cycle checkpoint activation, recombinational repair and maintenance of genomic stability. Required for efficient homologous recombination-dependent repair of double-strand breaks (DSBs). The protein is SOSS complex subunit C (inip) of Xenopus laevis (African clawed frog).